The following is a 913-amino-acid chain: Protein translocase subunit SecA (913 aa).

ATP contacts are provided by residues Q87, 105–109, and D517; that span reads GEGKT. Disordered regions lie at residues 568-588 and 871-913; these read ESRR…DPGS and EVAV…GKLS. Zn(2+) is bound by residues C897, C899, C908, and H909. Residues 903 to 913 show a composition bias toward basic residues; the sequence is KKYKQCHGKLS.

Belongs to the SecA family. In terms of assembly, monomer and homodimer. Part of the essential Sec protein translocation apparatus which comprises SecA, SecYEG and auxiliary proteins SecDF-YajC and YidC. The cofactor is Zn(2+).

The protein localises to the cell inner membrane. It is found in the cytoplasm. It carries out the reaction ATP + H2O + cellular proteinSide 1 = ADP + phosphate + cellular proteinSide 2.. In terms of biological role, part of the Sec protein translocase complex. Interacts with the SecYEG preprotein conducting channel. Has a central role in coupling the hydrolysis of ATP to the transfer of proteins into and across the cell membrane, serving both as a receptor for the preprotein-SecB complex and as an ATP-driven molecular motor driving the stepwise translocation of polypeptide chains across the membrane. The sequence is that of Protein translocase subunit SecA from Coxiella burnetii (strain RSA 493 / Nine Mile phase I).